Consider the following 330-residue polypeptide: Class III chitinase ARB_03514 (330 aa).

The signal sequence occupies residues 1 to 22 (MSSVKNILSFVALFAGVKTAYA). One can recognise a GH18 domain in the interval 23–314 (GLNSPGHNNV…SAVKGALSAG (292 aa)). Residues N61 and N135 are each glycosylated (N-linked (GlcNAc...) asparagine). Catalysis depends on E155, which acts as the Proton donor. N-linked (GlcNAc...) asparagine glycosylation is found at N278 and N302.

The protein belongs to the glycosyl hydrolase 18 family. Chitinase class III subfamily. As to quaternary structure, monomer.

It is found in the secreted. It catalyses the reaction Random endo-hydrolysis of N-acetyl-beta-D-glucosaminide (1-&gt;4)-beta-linkages in chitin and chitodextrins.. Its function is as follows. Secreted chitinase involved in the degradation of chitin, a component of the cell walls of fungi and exoskeletal elements of some animals (including worms and arthropods). Plays a morphogenetic role during apical growth, cell division and differentiation (cell wall morphogenesis). This is Class III chitinase ARB_03514 from Arthroderma benhamiae (strain ATCC MYA-4681 / CBS 112371) (Trichophyton mentagrophytes).